A 349-amino-acid polypeptide reads, in one-letter code: Phosphoribosylformylglycinamidine cyclo-ligase (349 aa).

The protein belongs to the AIR synthase family.

The protein resides in the cytoplasm. The enzyme catalyses 2-formamido-N(1)-(5-O-phospho-beta-D-ribosyl)acetamidine + ATP = 5-amino-1-(5-phospho-beta-D-ribosyl)imidazole + ADP + phosphate + H(+). Its pathway is purine metabolism; IMP biosynthesis via de novo pathway; 5-amino-1-(5-phospho-D-ribosyl)imidazole from N(2)-formyl-N(1)-(5-phospho-D-ribosyl)glycinamide: step 2/2. The chain is Phosphoribosylformylglycinamidine cyclo-ligase from Lactobacillus helveticus (strain DPC 4571).